An 88-amino-acid polypeptide reads, in one-letter code: RNA-binding protein Hfq (88 aa).

In terms of domain architecture, Sm spans 9–68 (DPFLNALRCERIPVSIYLVNGIKLQGQIESFDQFVILLKNTVNQMVYKHAISTVVPARAV). The tract at residues 66–88 (RAVSHHTASDRPQGERPQETTEE) is disordered. A compositionally biased stretch (basic and acidic residues) spans 72–88 (TASDRPQGERPQETTEE).

Belongs to the Hfq family. In terms of assembly, homohexamer.

In terms of biological role, RNA chaperone that binds small regulatory RNA (sRNAs) and mRNAs to facilitate mRNA translational regulation in response to envelope stress, environmental stress and changes in metabolite concentrations. Also binds with high specificity to tRNAs. This Aliivibrio salmonicida (strain LFI1238) (Vibrio salmonicida (strain LFI1238)) protein is RNA-binding protein Hfq.